Here is a 606-residue protein sequence, read N- to C-terminus: MALRLPASKAAEVAIGSIGCGYDLAIDLRLKYCKGGSKDSRLLDIKEGDDNCEIVLPGGISIPNVSKSIKCDKGERMRFRSDILPFQQMAEQFNQELSLAGKIPSGLFNAMFEFSSCWQKDAAYTKNLAFDGVFISLYSVALDKSQVLLREHVKQAVPSTWDPAALARFIDIYGTHIIVSVKMGGKDVIYAKQQHSSKLQPEDLQKRLKEVADKRFVEASVVHNTGSERVQASSKVETKEQRLRFADTSSLGSYANKEDYVFMCKRRGGNDNRNLMHNEWLQTVQMEPDVISMSFIPITSLLNGVPGSGFLSHAINLYLRYKPPIEELHQFLEFQLPRQWAPVFSELPLGPQRKQQSCASLQFSFFGPKLYVNTTPVDVGKRPITGMRLYLEGRRSNRLAIHLQHLSSLPKIYQLEDDLNRSIRQESHDRRYYEKVNWKNYSHVCTEPVESDDDLSVVTGAQLHVESHGFKNVLFLRLCFSRVVGATLVKNSEWDEAVGFAPKSGLISTLISHHFTAAQKPPPRPADVNINSAIYPGGPPVPTQAPKLLKFVDTSEMTRGPQESPGYWVVSGARLLVEKGKISLKVKYSLFTPILGDEVIEEAYEG.

The region spanning 1 to 332 is the MACPF domain; that stretch reads MALRLPASKA…PPIEELHQFL (332 aa).

Belongs to the complement C6/C7/C8/C9 (TC 1.C.39) family.

Negatively controls the salicylic acid (SA)-mediated pathway of programmed cell death in plant immunity. The sequence is that of MACPF domain-containing protein At4g24290 from Arabidopsis thaliana (Mouse-ear cress).